The primary structure comprises 194 residues: uncharacterized protein (194 aa).

An N-terminal signal peptide occupies residues 1–29 (MKKAFLVFLSVVLVTTVFLVKQQESVAQA). The stretch at 104-131 (KVDELLKKAGQIVEEKVEAAKEIAASKD) forms a coiled coil. The chain crosses the membrane as a helical span at residues 149–171 (YFYYVSYVAAAGALILIILAIDI).

The protein resides in the membrane. This is an uncharacterized protein from Bacillus subtilis (strain 168).